The following is a 92-amino-acid chain: Small ribosomal subunit protein uS19 (92 aa).

It belongs to the universal ribosomal protein uS19 family.

Functionally, protein S19 forms a complex with S13 that binds strongly to the 16S ribosomal RNA. The polypeptide is Small ribosomal subunit protein uS19 (Shewanella amazonensis (strain ATCC BAA-1098 / SB2B)).